The primary structure comprises 510 residues: Major facilitator superfamily domain-containing protein 8 (510 aa).

At 1–38 (MASIDDDDDERTPLLQDSHIGELVETQKQLKSRWWSIR) the chain is on the cytoplasmic side. Residues 14–15 (LL) carry the Dileucine internalization motif motif. Residues 39–59 (VMYLTMFLSSVGFSIVMTSIW) form a helical membrane-spanning segment. Topologically, residues 60–72 (PYLQKVDQSADAS) are extracellular. The chain crosses the membrane as a helical span at residues 73-93 (FLGWVIASFSLGQMVASPLFG). Over 94 to 103 (LWSNHRPRRE) the chain is Cytoplasmic. Residues 104-124 (PLVVSITILVAASCLYAYVHV) traverse the membrane as a helical segment. Over 125–132 (PASHNKYY) the chain is Extracellular. A helical membrane pass occupies residues 133-155 (MLLARTFVGFGSGNVAVVRSYVA). Residues 156 to 171 (GATSLSERTGAMANIS) are Cytoplasmic-facing. The helical transmembrane segment at 172 to 192 (AFQAMGFILGPAFQAALSVIG) threads the bilayer. Over 193–209 (ETGITINGISLQVNMYT) the chain is Extracellular. Residues 210-230 (APALMGALLGIGNIILIFAIF) form a helical membrane-spanning segment. At 231 to 264 (REHRVDDLEKNVSSINSESEVTDVEKANEGPIDQ) the chain is on the cytoplasmic side. A helical membrane pass occupies residues 265–285 (IAVISSNILFFVVLFVFAIFE). Residues 286–302 (TISTPLTMDMYAWTRTQ) lie on the Extracellular side of the membrane. Residues 303–323 (AVFYNGIILAAVGVESVIVFL) form a helical membrane-spanning segment. Residues 324–335 (TVKILCKKTGER) lie on the Cytoplasmic side of the membrane. A helical transmembrane segment spans residues 336–356 (VLLLGGLAVIWIGFFILLPWG). Over 357–406 (NQMPKIQWTDLQNATIHNTTQWTSSIPSSGNHSVEPTGCPVIQTWCLYTP) the chain is Extracellular. N-linked (GlcNAc...) asparagine glycosylation is found at Asn-369 and Asn-374. Residues 407-427 (VIHLAQYLTSDILIGVGYPIC) traverse the membrane as a helical segment. Residues 428 to 445 (NVMSYTLYSKIIGPKPQG) are Cytoplasmic-facing. A helical membrane pass occupies residues 446 to 466 (LYMGWLTAAGSAARTLGPVFV). At 467–476 (SQIYTHLGTR) the chain is on the extracellular side. Residues 477 to 497 (WTFGIICAFVALSLLHLTAVY) form a helical membrane-spanning segment. Topologically, residues 498–510 (KRLIPFSTRYERL) are cytoplasmic.

It belongs to the major facilitator superfamily.

It is found in the lysosome membrane. In terms of biological role, may be a carrier that transport small solutes by using chemiosmotic ion gradients. In Xenopus laevis (African clawed frog), this protein is Major facilitator superfamily domain-containing protein 8 (mfsd8).